Consider the following 142-residue polypeptide: Probable inactive dual specificity protein phosphatase-like At4g18593 (142 aa).

This sequence belongs to the protein-tyrosine phosphatase family. Non-receptor class dual specificity subfamily.

The chain is Probable inactive dual specificity protein phosphatase-like At4g18593 from Arabidopsis thaliana (Mouse-ear cress).